The following is a 289-amino-acid chain: Xyloglucan endotransglucosylase/hydrolase protein 15 (289 aa).

The N-terminal stretch at 1–25 is a signal peptide; sequence MGPSSSLTTIVATVLLVTLFGSAYA. The 191-residue stretch at 26–216 folds into the GH16 domain; sequence SNFFDEFDLT…WSKAPFTAYY (191 aa). Glu-102 serves as the catalytic Nucleophile. The active-site Proton donor is the Glu-106. Glu-106 is a xyloglucan binding site. An N-linked (GlcNAc...) asparagine glycan is attached at Asn-110. Xyloglucan contacts are provided by residues 119-121, 129-131, 195-196, and Gly-200; these read HTN, DRE, and DW. Intrachain disulfides connect Cys-224–Cys-230 and Cys-270–Cys-284. Arg-275 lines the xyloglucan pocket.

It belongs to the glycosyl hydrolase 16 family. XTH group 2 subfamily. In terms of processing, contains at least one intrachain disulfide bond essential for its enzymatic activity. As to expression, strongly expressed in roots, hypocotyls and cotyledons. Aslo detected in inflorescence stems and in the carpels and styles in flowers.

Its subcellular location is the secreted. The protein localises to the cell wall. It is found in the extracellular space. It localises to the apoplast. The catalysed reaction is breaks a beta-(1-&gt;4) bond in the backbone of a xyloglucan and transfers the xyloglucanyl segment on to O-4 of the non-reducing terminal glucose residue of an acceptor, which can be a xyloglucan or an oligosaccharide of xyloglucan.. It carries out the reaction xyloglucan + H2O = xyloglucan oligosaccharides.. Its function is as follows. Catalyzes xyloglucan endohydrolysis (XEH) and/or endotransglycosylation (XET). Cleaves and religates xyloglucan polymers, an essential constituent of the primary cell wall, and thereby participates in cell wall construction of growing tissues. Has a high XET activity, but little or no XEH activity in vitro. Acceptor preferences are XXXGol &gt; XLLGol = XLFGol &gt; XXLGol &gt; XXFGol. The polypeptide is Xyloglucan endotransglucosylase/hydrolase protein 15 (Arabidopsis thaliana (Mouse-ear cress)).